The primary structure comprises 130 residues: Small ribosomal subunit protein uS11 (130 aa).

This sequence belongs to the universal ribosomal protein uS11 family. Part of the 30S ribosomal subunit. Interacts with proteins S7 and S18. Binds to IF-3.

In terms of biological role, located on the platform of the 30S subunit, it bridges several disparate RNA helices of the 16S rRNA. Forms part of the Shine-Dalgarno cleft in the 70S ribosome. This chain is Small ribosomal subunit protein uS11, found in Alkalilimnicola ehrlichii (strain ATCC BAA-1101 / DSM 17681 / MLHE-1).